Reading from the N-terminus, the 128-residue chain is Small ribosomal subunit protein uS11 (128 aa).

This sequence belongs to the universal ribosomal protein uS11 family. As to quaternary structure, part of the 30S ribosomal subunit. Interacts with proteins S7 and S18. Binds to IF-3.

In terms of biological role, located on the platform of the 30S subunit, it bridges several disparate RNA helices of the 16S rRNA. Forms part of the Shine-Dalgarno cleft in the 70S ribosome. This is Small ribosomal subunit protein uS11 from Wolbachia pipientis wMel.